We begin with the raw amino-acid sequence, 461 residues long: Glucan endo-1,3-beta-glucosidase (461 aa).

The N-terminal stretch at 1–23 is a signal peptide; that stretch reads MPLLILLMLLAAGAAGAESATPS. E123 functions as the Proton donor in the catalytic mechanism. Residue E265 is the Nucleophile of the active site. The interval 350-375 is disordered; sequence GASVAPTPSPNPSPNPSPKPAPSGGG. Positions 356-370 are enriched in pro residues; that stretch reads TPSPNPSPNPSPKPA. The cysteines at positions 378 and 439 are disulfide-linked.

This sequence belongs to the glycosyl hydrolase 17 family. In terms of processing, contains two additional disulfide bonds.

It carries out the reaction Hydrolysis of (1-&gt;3)-beta-D-glucosidic linkages in (1-&gt;3)-beta-D-glucans.. Its function is as follows. Is thought to be an important plant defense-related product against fungal pathogens. This chain is Glucan endo-1,3-beta-glucosidase (GLC1), found in Triticum aestivum (Wheat).